Here is a 349-residue protein sequence, read N- to C-terminus: Fructose-1,6-bisphosphatase class 1 (349 aa).

Residues Glu113, Asp135, Ile137, and Asp138 each contribute to the Mg(2+) site. Substrate-binding positions include 138 to 141 (DGSS), Asn230, Tyr258, and Lys288. Glu294 is a Mg(2+) binding site.

Belongs to the FBPase class 1 family. As to quaternary structure, homotetramer. Mg(2+) serves as cofactor.

The protein localises to the cytoplasm. The enzyme catalyses beta-D-fructose 1,6-bisphosphate + H2O = beta-D-fructose 6-phosphate + phosphate. It participates in carbohydrate biosynthesis; Calvin cycle. This is Fructose-1,6-bisphosphatase class 1 from Trichormus variabilis (strain ATCC 29413 / PCC 7937) (Anabaena variabilis).